A 128-amino-acid polypeptide reads, in one-letter code: Sulfurtransferase TusD (128 aa).

The Cysteine persulfide intermediate role is filled by cysteine 78.

It belongs to the DsrE/TusD family. Heterohexamer, formed by a dimer of trimers. The hexameric TusBCD complex contains 2 copies each of TusB, TusC and TusD. The TusBCD complex interacts with TusE.

Its subcellular location is the cytoplasm. In terms of biological role, part of a sulfur-relay system required for 2-thiolation of 5-methylaminomethyl-2-thiouridine (mnm(5)s(2)U) at tRNA wobble positions. Accepts sulfur from TusA and transfers it in turn to TusE. In Escherichia coli O127:H6 (strain E2348/69 / EPEC), this protein is Sulfurtransferase TusD.